Here is a 318-residue protein sequence, read N- to C-terminus: Bifunctional protein FolD 3 (318 aa).

NADP(+)-binding positions include Gly173–Ser175 and Ile242.

It belongs to the tetrahydrofolate dehydrogenase/cyclohydrolase family. As to quaternary structure, homodimer.

It carries out the reaction (6R)-5,10-methylene-5,6,7,8-tetrahydrofolate + NADP(+) = (6R)-5,10-methenyltetrahydrofolate + NADPH. The catalysed reaction is (6R)-5,10-methenyltetrahydrofolate + H2O = (6R)-10-formyltetrahydrofolate + H(+). Its pathway is one-carbon metabolism; tetrahydrofolate interconversion. Functionally, catalyzes the oxidation of 5,10-methylenetetrahydrofolate to 5,10-methenyltetrahydrofolate and then the hydrolysis of 5,10-methenyltetrahydrofolate to 10-formyltetrahydrofolate. This is Bifunctional protein FolD 3 from Rubrobacter xylanophilus (strain DSM 9941 / JCM 11954 / NBRC 16129 / PRD-1).